The chain runs to 156 residues: 6,7-dimethyl-8-ribityllumazine synthase (156 aa).

5-amino-6-(D-ribitylamino)uracil contacts are provided by residues Phe22, 57 to 59 (AYE), and 81 to 83 (TVI). 86–87 (GT) provides a ligand contact to (2S)-2-hydroxy-3-oxobutyl phosphate. His89 acts as the Proton donor in catalysis. Phe114 contacts 5-amino-6-(D-ribitylamino)uracil. Position 128 (Arg128) interacts with (2S)-2-hydroxy-3-oxobutyl phosphate.

Belongs to the DMRL synthase family. In terms of assembly, forms an icosahedral capsid composed of 60 subunits, arranged as a dodecamer of pentamers.

The catalysed reaction is (2S)-2-hydroxy-3-oxobutyl phosphate + 5-amino-6-(D-ribitylamino)uracil = 6,7-dimethyl-8-(1-D-ribityl)lumazine + phosphate + 2 H2O + H(+). It functions in the pathway cofactor biosynthesis; riboflavin biosynthesis; riboflavin from 2-hydroxy-3-oxobutyl phosphate and 5-amino-6-(D-ribitylamino)uracil: step 1/2. Functionally, catalyzes the formation of 6,7-dimethyl-8-ribityllumazine by condensation of 5-amino-6-(D-ribitylamino)uracil with 3,4-dihydroxy-2-butanone 4-phosphate. This is the penultimate step in the biosynthesis of riboflavin. In Photorhabdus laumondii subsp. laumondii (strain DSM 15139 / CIP 105565 / TT01) (Photorhabdus luminescens subsp. laumondii), this protein is 6,7-dimethyl-8-ribityllumazine synthase.